The chain runs to 161 residues: Methylated-DNA--protein-cysteine methyltransferase (161 aa).

Catalysis depends on cysteine 128, which acts as the Nucleophile; methyl group acceptor.

Belongs to the MGMT family.

The protein resides in the cytoplasm. It carries out the reaction a 6-O-methyl-2'-deoxyguanosine in DNA + L-cysteinyl-[protein] = S-methyl-L-cysteinyl-[protein] + a 2'-deoxyguanosine in DNA. The catalysed reaction is a 4-O-methyl-thymidine in DNA + L-cysteinyl-[protein] = a thymidine in DNA + S-methyl-L-cysteinyl-[protein]. Functionally, involved in the cellular defense against the biological effects of O6-methylguanine (O6-MeG) and O4-methylthymine (O4-MeT) in DNA. Repairs the methylated nucleobase in DNA by stoichiometrically transferring the methyl group to a cysteine residue in the enzyme. This is a suicide reaction: the enzyme is irreversibly inactivated. The sequence is that of Methylated-DNA--protein-cysteine methyltransferase from Methanocaldococcus vulcanius (strain ATCC 700851 / DSM 12094 / M7) (Methanococcus vulcanius).